A 376-amino-acid polypeptide reads, in one-letter code: Succinyl-diaminopimelate desuccinylase (376 aa).

Residue His74 participates in Zn(2+) binding. Residue Asp76 is part of the active site. Asp105 serves as a coordination point for Zn(2+). Glu135 serves as the catalytic Proton acceptor. Zn(2+) is bound by residues Glu136, Glu164, and His349.

Belongs to the peptidase M20A family. DapE subfamily. Homodimer. Requires Zn(2+) as cofactor. Co(2+) serves as cofactor.

The enzyme catalyses N-succinyl-(2S,6S)-2,6-diaminopimelate + H2O = (2S,6S)-2,6-diaminopimelate + succinate. The protein operates within amino-acid biosynthesis; L-lysine biosynthesis via DAP pathway; LL-2,6-diaminopimelate from (S)-tetrahydrodipicolinate (succinylase route): step 3/3. Its function is as follows. Catalyzes the hydrolysis of N-succinyl-L,L-diaminopimelic acid (SDAP), forming succinate and LL-2,6-diaminopimelate (DAP), an intermediate involved in the bacterial biosynthesis of lysine and meso-diaminopimelic acid, an essential component of bacterial cell walls. The chain is Succinyl-diaminopimelate desuccinylase from Zymomonas mobilis subsp. mobilis (strain ATCC 31821 / ZM4 / CP4).